An 85-amino-acid chain; its full sequence is Small integral membrane protein 2 (85 aa).

A helical membrane pass occupies residues 21-43 (GHAISILFGFWTSFICDTYIVLA). Residues 51-85 (SPDVSASSDEPYARIQQSRRQCHAEEDQSQVPEAG) form a disordered region.

The protein localises to the membrane. This Homo sapiens (Human) protein is Small integral membrane protein 2 (SMIM2).